The following is a 274-amino-acid chain: Protein YeeZ (274 aa).

The signal sequence occupies residues 1 to 24; sequence MKKVAIVGLGWLGMPLAMSLSARG. Residue 170-177 participates in ATP binding; that stretch reads GRFFAGKT.

This Escherichia coli O157:H7 protein is Protein YeeZ (yeeZ).